Consider the following 184-residue polypeptide: Photosystem I assembly protein Ycf4 (184 aa).

Helical transmembrane passes span 22 to 42 (FCWA…GTSS) and 57 to 77 (IVFF…LFIS).

Belongs to the Ycf4 family.

It localises to the plastid. The protein localises to the chloroplast thylakoid membrane. Functionally, seems to be required for the assembly of the photosystem I complex. The chain is Photosystem I assembly protein Ycf4 from Gossypium barbadense (Sea Island cotton).